The sequence spans 405 residues: Argininosuccinate synthase (405 aa).

ATP is bound by residues 10-18 and Ala37; that span reads AYSGGLDTS. Residues Tyr88 and Ser93 each contribute to the L-citrulline site. Residue Gly118 participates in ATP binding. Residues Thr120, Asn124, and Asp125 each coordinate L-aspartate. Asn124 serves as a coordination point for L-citrulline. Residues Arg128, Ser179, Ser188, Glu264, and Tyr276 each coordinate L-citrulline.

It belongs to the argininosuccinate synthase family. Type 1 subfamily. In terms of assembly, homotetramer.

It is found in the cytoplasm. It carries out the reaction L-citrulline + L-aspartate + ATP = 2-(N(omega)-L-arginino)succinate + AMP + diphosphate + H(+). It functions in the pathway amino-acid biosynthesis; L-arginine biosynthesis; L-arginine from L-ornithine and carbamoyl phosphate: step 2/3. This is Argininosuccinate synthase from Nitrosococcus oceani (strain ATCC 19707 / BCRC 17464 / JCM 30415 / NCIMB 11848 / C-107).